A 512-amino-acid chain; its full sequence is Cercosporin MFS transporter CTB4 (512 aa).

A run of 12 helical transmembrane segments spans residues 72 to 92 (WVIT…SSVF), 110 to 130 (VVLG…IFWG), 142 to 162 (LLAG…ARSL), 170 to 190 (FLGG…LADI), 202 to 222 (TVGA…SVLV), 230 to 250 (WIAN…FPFL), 306 to 326 (ILLM…NFFL), 343 to 363 (ASLP…LLSF), 383 to 403 (LLLM…FAWT), 407 to 427 (TMNP…IHLI), 456 to 476 (LFAA…GVKW), and 480 to 500 (ILAL…YFGA).

Belongs to the major facilitator superfamily. CAR1 family.

The protein resides in the cell membrane. Its function is as follows. MFS transporter; part of the gene cluster that mediates the biosynthesis of cercosporin, a light-activated, non-host-selective toxin. The perylenequinone chromophore of cercosporin absorbs light energy to attain an electronically-activated triplet state and produces active oxygen species such as the hydroxyl radical, superoxide, hydrogen peroxide or singlet oxygen upon reaction with oxygen molecules. These reactive oxygen species cause damage to various cellular components including lipids, proteins and nucleic acids. Responsible for secretion and accumulation of cercosporin, but does not play any roles in self-protection against the toxicity of cercosporin. The protein is Cercosporin MFS transporter CTB4 of Cercospora nicotianae (Barn spot disease fungus).